The primary structure comprises 286 residues: Tyrosine recombinase XerA (286 aa).

Residues 5-82 (TLRSEVLEEF…ALKAYFKFEG (78 aa)) form the Core-binding (CB) domain. The region spanning 98 to 274 (TLPKSLTEEE…TAKHLKEAVE (177 aa)) is the Tyr recombinase domain. Catalysis depends on residues Arg-135, Lys-160, His-226, Arg-229, and His-252. The O-(3'-phospho-DNA)-tyrosine intermediate role is filled by Tyr-261.

Belongs to the 'phage' integrase family. XerA subfamily.

It is found in the cytoplasm. Functionally, site-specific tyrosine recombinase, which acts by catalyzing the cutting and rejoining of the recombining DNA molecules. This is Tyrosine recombinase XerA from Pyrococcus furiosus (strain ATCC 43587 / DSM 3638 / JCM 8422 / Vc1).